Consider the following 584-residue polypeptide: ATP-dependent lipid A-core flippase (584 aa).

5 helical membrane-spanning segments follow: residues 18-38 (LWPI…TLIL), 65-85 (VFVW…FSGF), 155-175 (IIGL…ILVL), 252-272 (IFDP…LYAA), and 277-297 (VMEM…IVLM). Positions 30–312 (VVASITLILN…LTNVSAQFQR (283 aa)) constitute an ABC transmembrane type-1 domain. Residues 344-580 (IIFDDVTFFY…QGIYAQLYKL (237 aa)) form the ABC transporter domain. An ATP-binding site is contributed by 378–385 (GRSGSGKS).

The protein belongs to the ABC transporter superfamily. Lipid exporter (TC 3.A.1.106) family. As to quaternary structure, homodimer.

The protein localises to the cell inner membrane. It carries out the reaction ATP + H2O + lipid A-core oligosaccharideSide 1 = ADP + phosphate + lipid A-core oligosaccharideSide 2.. Its function is as follows. Involved in lipopolysaccharide (LPS) biosynthesis. Translocates lipid A-core from the inner to the outer leaflet of the inner membrane. Transmembrane domains (TMD) form a pore in the inner membrane and the ATP-binding domain (NBD) is responsible for energy generation. The polypeptide is ATP-dependent lipid A-core flippase (Blochmanniella pennsylvanica (strain BPEN)).